A 701-amino-acid polypeptide reads, in one-letter code: Polyribonucleotide nucleotidyltransferase (701 aa).

The Mg(2+) site is built by aspartate 487 and aspartate 493. Positions 554–613 (PTMIAMKIDTDKIRDVIGKGGATIRAICEETKASIDIEDDGSIKIFGESKEAAEAARQRV) constitute a KH domain. Residues 623–691 (GKIYVGKVER…NRGRIKLSIK (69 aa)) form the S1 motif domain.

The protein belongs to the polyribonucleotide nucleotidyltransferase family. As to quaternary structure, component of the RNA degradosome, which is a multiprotein complex involved in RNA processing and mRNA degradation. The cofactor is Mg(2+).

It is found in the cytoplasm. It catalyses the reaction RNA(n+1) + phosphate = RNA(n) + a ribonucleoside 5'-diphosphate. Involved in mRNA degradation. Catalyzes the phosphorolysis of single-stranded polyribonucleotides processively in the 3'- to 5'-direction. The polypeptide is Polyribonucleotide nucleotidyltransferase (Pseudomonas savastanoi pv. phaseolicola (strain 1448A / Race 6) (Pseudomonas syringae pv. phaseolicola (strain 1448A / Race 6))).